The primary structure comprises 515 residues: Galactokinase (515 aa).

4 residues coordinate alpha-D-galactose: arginine 48, aspartate 54, histidine 55, and aspartate 57. Residues glycine 155, glycine 157, serine 159, and serine 160 each contribute to the ATP site. Aspartate 205 is a binding site for alpha-D-galactose. The active-site Proton acceptor is aspartate 205. Serine 249, asparagine 250, and lysine 251 together coordinate ATP. Tyrosine 259 contacts alpha-D-galactose.

The protein belongs to the GHMP kinase family. GalK subfamily.

The enzyme catalyses alpha-D-galactose + ATP = alpha-D-galactose 1-phosphate + ADP + H(+). It functions in the pathway carbohydrate metabolism; galactose metabolism. In terms of biological role, galactokinase is a key enzyme in the galactose metabolism where it catalyzes the conversion of alpha-D-galactose to galactose 1-phosphate. Can also induce the transcription of the gal genes in response to the organism being challenged with galactose as the sole source of carbon. This Candida albicans (Yeast) protein is Galactokinase.